The primary structure comprises 174 residues: Crossover junction endodeoxyribonuclease RuvC (174 aa).

Catalysis depends on residues aspartate 8, glutamate 67, and aspartate 139. 3 residues coordinate Mg(2+): aspartate 8, glutamate 67, and aspartate 139.

This sequence belongs to the RuvC family. Homodimer which binds Holliday junction (HJ) DNA. The HJ becomes 2-fold symmetrical on binding to RuvC with unstacked arms; it has a different conformation from HJ DNA in complex with RuvA. In the full resolvosome a probable DNA-RuvA(4)-RuvB(12)-RuvC(2) complex forms which resolves the HJ. Requires Mg(2+) as cofactor.

Its subcellular location is the cytoplasm. It carries out the reaction Endonucleolytic cleavage at a junction such as a reciprocal single-stranded crossover between two homologous DNA duplexes (Holliday junction).. Functionally, the RuvA-RuvB-RuvC complex processes Holliday junction (HJ) DNA during genetic recombination and DNA repair. Endonuclease that resolves HJ intermediates. Cleaves cruciform DNA by making single-stranded nicks across the HJ at symmetrical positions within the homologous arms, yielding a 5'-phosphate and a 3'-hydroxyl group; requires a central core of homology in the junction. The consensus cleavage sequence is 5'-(A/T)TT(C/G)-3'. Cleavage occurs on the 3'-side of the TT dinucleotide at the point of strand exchange. HJ branch migration catalyzed by RuvA-RuvB allows RuvC to scan DNA until it finds its consensus sequence, where it cleaves and resolves the cruciform DNA. The sequence is that of Crossover junction endodeoxyribonuclease RuvC from Pseudomonas putida (strain GB-1).